A 354-amino-acid polypeptide reads, in one-letter code: Uroporphyrinogen decarboxylase (354 aa).

Substrate is bound by residues 25-29, Phe-44, Asp-75, Tyr-152, Thr-207, and His-330; that span reads RQAGR.

The protein belongs to the uroporphyrinogen decarboxylase family. As to quaternary structure, homodimer.

Its subcellular location is the cytoplasm. It carries out the reaction uroporphyrinogen III + 4 H(+) = coproporphyrinogen III + 4 CO2. It functions in the pathway porphyrin-containing compound metabolism; protoporphyrin-IX biosynthesis; coproporphyrinogen-III from 5-aminolevulinate: step 4/4. Its function is as follows. Catalyzes the decarboxylation of four acetate groups of uroporphyrinogen-III to yield coproporphyrinogen-III. The polypeptide is Uroporphyrinogen decarboxylase (Xylella fastidiosa (strain Temecula1 / ATCC 700964)).